Here is a 198-residue protein sequence, read N- to C-terminus: Zinc finger protein 41 (198 aa).

Residues 1–12 show a composition bias toward basic residues; sequence MEKPATRKKKSQ. A disordered region spans residues 1–56; that stretch reads MEKPATRKKKSQAPKEEAGAQKATVKGEKTSKGKKATKKPRKPRRPRKEPVLSPED. Basic and acidic residues predominate over residues 13–31; it reads APKEEAGAQKATVKGEKTS. Basic residues predominate over residues 32-47; sequence KGKKATKKPRKPRRPR. C2H2-type zinc fingers lie at residues 87-109, 115-137, 143-165, and 171-193; these read YECG…QRVH, FKCD…QRIH, FKCG…QKTH, and YGCE…RKRH.

It belongs to the krueppel C2H2-type zinc-finger protein family. As to expression, predominantly in the spermatocytes and spermatids of testes. It is also expressed in the fetus and embryonic stem cells at lower levels.

The protein localises to the nucleus. In terms of biological role, a putative DNA-binding regulatory protein associated with meiosis in spermatogenesis. This chain is Zinc finger protein 41 (Zfp41), found in Mus musculus (Mouse).